Here is a 280-residue protein sequence, read N- to C-terminus: Shikimate dehydrogenase (NADP(+)) (280 aa).

Shikimate is bound by residues 19 to 21 and threonine 66; that span reads SFS. Lysine 70 serves as the catalytic Proton acceptor. Glutamate 82 provides a ligand contact to NADP(+). The shikimate site is built by asparagine 91 and aspartate 106. NADP(+) is bound by residues 130–134 and leucine 222; that span reads GSGGA. Residue tyrosine 224 coordinates shikimate. Glycine 245 is an NADP(+) binding site.

It belongs to the shikimate dehydrogenase family. As to quaternary structure, homodimer.

It carries out the reaction shikimate + NADP(+) = 3-dehydroshikimate + NADPH + H(+). It functions in the pathway metabolic intermediate biosynthesis; chorismate biosynthesis; chorismate from D-erythrose 4-phosphate and phosphoenolpyruvate: step 4/7. Its function is as follows. Involved in the biosynthesis of the chorismate, which leads to the biosynthesis of aromatic amino acids. Catalyzes the reversible NADPH linked reduction of 3-dehydroshikimate (DHSA) to yield shikimate (SA). In Methanococcus maripaludis (strain C7 / ATCC BAA-1331), this protein is Shikimate dehydrogenase (NADP(+)).